The primary structure comprises 279 residues: NADPH-dependent 7-cyano-7-deazaguanine reductase (279 aa).

86 to 88 (IES) lines the substrate pocket. Residue 88 to 89 (SK) participates in NADPH binding. Cys-187 (thioimide intermediate) is an active-site residue. Asp-194 (proton donor) is an active-site residue. 226–227 (HE) serves as a coordination point for substrate. NADPH is bound at residue 255–256 (RG).

It belongs to the GTP cyclohydrolase I family. QueF type 2 subfamily. Homodimer.

It is found in the cytoplasm. The catalysed reaction is 7-aminomethyl-7-carbaguanine + 2 NADP(+) = 7-cyano-7-deazaguanine + 2 NADPH + 3 H(+). It functions in the pathway tRNA modification; tRNA-queuosine biosynthesis. In terms of biological role, catalyzes the NADPH-dependent reduction of 7-cyano-7-deazaguanine (preQ0) to 7-aminomethyl-7-deazaguanine (preQ1). This is NADPH-dependent 7-cyano-7-deazaguanine reductase from Histophilus somni (strain 129Pt) (Haemophilus somnus).